We begin with the raw amino-acid sequence, 435 residues long: Serine hydroxymethyltransferase (435 aa).

(6S)-5,6,7,8-tetrahydrofolate contacts are provided by residues Leu133 and 137 to 139; that span reads GHL. Lys242 is modified (N6-(pyridoxal phosphate)lysine).

This sequence belongs to the SHMT family. As to quaternary structure, homodimer. Pyridoxal 5'-phosphate serves as cofactor.

The protein resides in the cytoplasm. It carries out the reaction (6R)-5,10-methylene-5,6,7,8-tetrahydrofolate + glycine + H2O = (6S)-5,6,7,8-tetrahydrofolate + L-serine. The protein operates within one-carbon metabolism; tetrahydrofolate interconversion. It functions in the pathway amino-acid biosynthesis; glycine biosynthesis; glycine from L-serine: step 1/1. Catalyzes the reversible interconversion of serine and glycine with tetrahydrofolate (THF) serving as the one-carbon carrier. This reaction serves as the major source of one-carbon groups required for the biosynthesis of purines, thymidylate, methionine, and other important biomolecules. Also exhibits THF-independent aldolase activity toward beta-hydroxyamino acids, producing glycine and aldehydes, via a retro-aldol mechanism. The chain is Serine hydroxymethyltransferase from Hyphomonas neptunium (strain ATCC 15444).